The primary structure comprises 600 residues: Prostaglandin G/H synthase 1 (600 aa).

The first 24 residues, 1-24 (MSRQSISLRFPLLLLLLSPSPVFS), serve as a signal peptide directing secretion. One can recognise an EGF-like domain in the interval 32 to 70 (PVNPCCYYPCQHQGICVRFGLDRYQCDCTRTGYSGPNCT). Intrachain disulfides connect Cys36–Cys47, Cys37–Cys159, Cys41–Cys57, and Cys59–Cys69. N-linked (GlcNAc...) asparagine glycosylation occurs at Asn68. Helical transmembrane passes span 74-82 (IWTWLRTTL), 86-92 (PSFIHFL), 97-105 (RWLWDFVNA), and 108-122 (IRDTLMRLVLTVRSN). A glycan (N-linked (GlcNAc...) asparagine) is linked at Asn144. The active-site Proton acceptor is the His207. Tyr385 (for cyclooxygenase activity) is an active-site residue. A heme b-binding site is contributed by His388. The N-linked (GlcNAc...) asparagine glycan is linked to Asn410. Cys569 and Cys575 are disulfide-bonded.

It belongs to the prostaglandin G/H synthase family. Homodimer. It depends on heme b as a cofactor.

It is found in the endoplasmic reticulum membrane. The protein localises to the microsome membrane. It carries out the reaction (5Z,8Z,11Z,14Z)-eicosatetraenoate + AH2 + 2 O2 = prostaglandin H2 + A + H2O. The enzyme catalyses (5Z,8Z,11Z,14Z)-eicosatetraenoate + 2 O2 = prostaglandin G2. It catalyses the reaction prostaglandin G2 + AH2 = prostaglandin H2 + A + H2O. The catalysed reaction is (9Z,12Z)-octadecadienoate + AH2 + O2 = (9R)-hydroxy-(10E,12Z)-octadecadienoate + A + H2O. It carries out the reaction (9Z,12Z)-octadecadienoate + AH2 + O2 = (9S)-hydroxy-(10E,12Z)-octadecadienoate + A + H2O. The enzyme catalyses (9Z,12Z)-octadecadienoate + AH2 + O2 = (13S)-hydroxy-(9Z,11E)-octadecadienoate + A + H2O. It catalyses the reaction (9Z,12Z)-octadecadienoate + AH2 + O2 = (13R)-hydroxy-(9Z,11E)-octadecadienoate + A + H2O. The protein operates within lipid metabolism; prostaglandin biosynthesis. Its activity is regulated as follows. The cyclooxygenase activity is inhibited by nonsteroidal anti-inflammatory drugs (NSAIDs) including ibuprofen, flurbiprofen, ketoprofen, naproxen, flurbiprofen, anirolac, fenclofenac and diclofenac. Its function is as follows. Dual cyclooxygenase and peroxidase that plays an important role in the biosynthesis pathway of prostanoids, a class of C20 oxylipins mainly derived from arachidonate ((5Z,8Z,11Z,14Z)-eicosatetraenoate, AA, C20:4(n-6)), with a particular role in the inflammatory response. The cyclooxygenase activity oxygenates AA to the hydroperoxy endoperoxide prostaglandin G2 (PGG2), and the peroxidase activity reduces PGG2 to the hydroxy endoperoxide prostaglandin H2 (PGH2), the precursor of all 2-series prostaglandins and thromboxanes. This complex transformation is initiated by abstraction of hydrogen at carbon 13 (with S-stereochemistry), followed by insertion of molecular O2 to form the endoperoxide bridge between carbon 9 and 11 that defines prostaglandins. The insertion of a second molecule of O2 (bis-oxygenase activity) yields a hydroperoxy group in PGG2 that is then reduced to PGH2 by two electrons. Involved in the constitutive production of prostanoids in particular in the stomach and platelets. In gastric epithelial cells, it is a key step in the generation of prostaglandins, such as prostaglandin E2 (PGE2), which plays an important role in cytoprotection. In platelets, it is involved in the generation of thromboxane A2 (TXA2), which promotes platelet activation and aggregation, vasoconstriction and proliferation of vascular smooth muscle cells. Can also use linoleate (LA, (9Z,12Z)-octadecadienoate, C18:2(n-6)) as substrate and produce hydroxyoctadecadienoates (HODEs) in a regio- and stereospecific manner, being (9R)-HODE ((9R)-hydroxy-(10E,12Z)-octadecadienoate) and (13S)-HODE ((13S)-hydroxy-(9Z,11E)-octadecadienoate) its major products. This chain is Prostaglandin G/H synthase 1 (PTGS1), found in Ovis aries (Sheep).